The primary structure comprises 145 residues: Aminoglycoside N(6')-acetyltransferase type 1 (145 aa).

Residues 1–145 (MDIRQMNRTH…ERVIFYRKRC (145 aa)) form the N-acetyltransferase domain. 4 residues coordinate substrate: tryptophan 22, histidine 25, tyrosine 66, and glutamate 79. Acetyl-CoA-binding positions include 81–83 (IFV) and 89–94 (QRGVAK). Position 115 (aspartate 115) interacts with substrate. Asparagine 120 contributes to the acetyl-CoA binding site. Glutamate 136 lines the substrate pocket.

Homodimer.

It catalyses the reaction kanamycin B + acetyl-CoA = N(6')-acetylkanamycin B + CoA + H(+). In terms of biological role, catalyzes the transfer of an acetyl group from acetyl-CoA to the 6'-amino group of aminoglycoside molecules conferring resistance to antibiotics containing the purpurosamine ring. This is Aminoglycoside N(6')-acetyltransferase type 1 from Salmonella typhimurium (strain LT2 / SGSC1412 / ATCC 700720).